A 90-amino-acid chain; its full sequence is DNA-binding protein HU-alpha (90 aa).

This sequence belongs to the bacterial histone-like protein family. In terms of assembly, heterodimer of an alpha and a beta chain.

Histone-like DNA-binding protein which is capable of wrapping DNA to stabilize it, and thus to prevent its denaturation under extreme environmental conditions. This chain is DNA-binding protein HU-alpha (hupA), found in Serratia marcescens.